Reading from the N-terminus, the 484-residue chain is D-aminoacylase (484 aa).

The protein belongs to the metallo-dependent hydrolases superfamily. N-acyl-D-amino-acid deacylase family. Requires Zn(2+) as cofactor.

The protein localises to the cytoplasm. The catalysed reaction is an N-acyl-D-amino acid + H2O = a D-alpha-amino acid + a carboxylate. In terms of biological role, has a wide specificity; hydrolyzes N-acyl derivative of neutral D-amino acids. This Alcaligenes xylosoxydans xylosoxydans (Achromobacter xylosoxidans) protein is D-aminoacylase (dan).